A 252-amino-acid polypeptide reads, in one-letter code: Trans-aconitate 2-methyltransferase (252 aa).

This sequence belongs to the methyltransferase superfamily. Tam family.

It localises to the cytoplasm. The catalysed reaction is trans-aconitate + S-adenosyl-L-methionine = (E)-3-(methoxycarbonyl)pent-2-enedioate + S-adenosyl-L-homocysteine. Catalyzes the S-adenosylmethionine monomethyl esterification of trans-aconitate. This chain is Trans-aconitate 2-methyltransferase, found in Escherichia coli (strain SE11).